Consider the following 609-residue polypeptide: UvrABC system protein C (609 aa).

Positions 16 to 94 (HLPGVYRHLD…IKSLRPRYNI (79 aa)) constitute a GIY-YIG domain. Residues 203–238 (REVMDEIEARMLQASTELRFEEAAVLRDQMGSLSKV) form the UVR domain.

The protein belongs to the UvrC family. As to quaternary structure, interacts with UvrB in an incision complex.

It localises to the cytoplasm. Its function is as follows. The UvrABC repair system catalyzes the recognition and processing of DNA lesions. UvrC both incises the 5' and 3' sides of the lesion. The N-terminal half is responsible for the 3' incision and the C-terminal half is responsible for the 5' incision. The chain is UvrABC system protein C from Bordetella pertussis (strain Tohama I / ATCC BAA-589 / NCTC 13251).